A 197-amino-acid chain; its full sequence is Phosphoheptose isomerase (197 aa).

The SIS domain occupies 36-197 (MVNALLNEGK…IDSQLFGSEE (162 aa)). Substrate is bound at residue 51–53 (NGG). Histidine 60 and glutamate 64 together coordinate Zn(2+). Residues glutamate 64, 93 to 94 (ND), 119 to 121 (STS), serine 124, and glutamine 174 contribute to the substrate site. Zn(2+)-binding residues include glutamine 174 and histidine 182.

It belongs to the SIS family. GmhA subfamily. As to quaternary structure, homotetramer. Requires Zn(2+) as cofactor.

It is found in the cytoplasm. The enzyme catalyses 2 D-sedoheptulose 7-phosphate = D-glycero-alpha-D-manno-heptose 7-phosphate + D-glycero-beta-D-manno-heptose 7-phosphate. It participates in carbohydrate biosynthesis; D-glycero-D-manno-heptose 7-phosphate biosynthesis; D-glycero-alpha-D-manno-heptose 7-phosphate and D-glycero-beta-D-manno-heptose 7-phosphate from sedoheptulose 7-phosphate: step 1/1. Its function is as follows. Catalyzes the isomerization of sedoheptulose 7-phosphate in D-glycero-D-manno-heptose 7-phosphate. This chain is Phosphoheptose isomerase, found in Pseudomonas putida (strain W619).